The following is a 399-amino-acid chain: Carbamoyl phosphate synthase small chain (399 aa).

The CPSase stretch occupies residues 1–204 (MTKTTLSSDP…WNKGYTINNE (204 aa)). The L-glutamine site is built by serine 60, glycine 256, and glycine 258. The Glutamine amidotransferase type-1 domain maps to 208-396 (HIVAIDYGIK…HDLIVNYREQ (189 aa)). Residue cysteine 285 is the Nucleophile of the active site. L-glutamine contacts are provided by leucine 286, glutamine 289, asparagine 327, glycine 329, and phenylalanine 330. Catalysis depends on residues histidine 369 and glutamate 371.

The protein belongs to the CarA family. In terms of assembly, composed of two chains; the small (or glutamine) chain promotes the hydrolysis of glutamine to ammonia, which is used by the large (or ammonia) chain to synthesize carbamoyl phosphate. Tetramer of heterodimers (alpha,beta)4.

It catalyses the reaction hydrogencarbonate + L-glutamine + 2 ATP + H2O = carbamoyl phosphate + L-glutamate + 2 ADP + phosphate + 2 H(+). The enzyme catalyses L-glutamine + H2O = L-glutamate + NH4(+). The protein operates within amino-acid biosynthesis; L-arginine biosynthesis; carbamoyl phosphate from bicarbonate: step 1/1. It functions in the pathway pyrimidine metabolism; UMP biosynthesis via de novo pathway; (S)-dihydroorotate from bicarbonate: step 1/3. In terms of biological role, small subunit of the glutamine-dependent carbamoyl phosphate synthetase (CPSase). CPSase catalyzes the formation of carbamoyl phosphate from the ammonia moiety of glutamine, carbonate, and phosphate donated by ATP, constituting the first step of 2 biosynthetic pathways, one leading to arginine and/or urea and the other to pyrimidine nucleotides. The small subunit (glutamine amidotransferase) binds and cleaves glutamine to supply the large subunit with the substrate ammonia. This is Carbamoyl phosphate synthase small chain from Bartonella bacilliformis (strain ATCC 35685 / KC583 / Herrer 020/F12,63).